A 255-amino-acid chain; its full sequence is Post-GPI attachment to proteins factor 2 (255 aa).

Transmembrane regions (helical) follow at residues 25–45 (LAAL…SLLF), 80–100 (LAIF…LEYY), 111–131 (LGIL…CLSF), 143–163 (NAFV…YLLN), 185–205 (LFLV…RHNA), and 209–229 (AGVY…NMGF).

The protein belongs to the PGAP2 family.

The protein resides in the golgi apparatus membrane. It localises to the endoplasmic reticulum membrane. Functionally, involved in the lipid remodeling steps of GPI-anchor maturation. Required for stable expression of GPI-anchored proteins at the cell surface. This Drosophila pseudoobscura pseudoobscura (Fruit fly) protein is Post-GPI attachment to proteins factor 2.